Here is a 1914-residue protein sequence, read N- to C-terminus: COPII coat assembly protein sec16 (1914 aa).

2 disordered regions span residues 1-31 and 58-294; these read MAQSDVAAVWNPALRSDDNATPVPTGPASLE and IAFP…TRKS. The segment covering 110 to 130 has biased composition (basic and acidic residues); that stretch reads SYDHETPNLDAPQTEHAHDNE. 2 stretches are compositionally biased toward polar residues: residues 142–160 and 285–294; these read TEAQPAQPQAEDSISTEAT and QPASHITRKS. Repeat copies occupy residues 315 to 341, 342 to 368, 369 to 395, and 396 to 422. The 4 X 27 AA approximate tandem repeats stretch occupies residues 315–422; it reads PAAQEFDNAL…TVRKSSSEED (108 aa). A disordered region spans residues 352–376; it reads AAAATDNSADKPSSEEDPAAQELDN. Disordered stretches follow at residues 469-873, 1506-1568, 1600-1763, and 1776-1914; these read TAEH…PPGY, PSYS…MYQG, APQA…LGEE, and VNKK…VMAK. Over residues 512-521 the composition is skewed to polar residues; the sequence is TPHQPSTSDL. Residues 526–540 are compositionally biased toward low complexity; it reads PVPGAAPPANMAASA. The span at 558–567 shows a compositional bias: basic and acidic residues; it reads SFAERAKEGY. Composition is skewed to pro residues over residues 596 to 621 and 671 to 680; these read STPPPPRSNSIPIPPPSTSMPPPPLG and SSHPPPPPAN. Residues 709 to 721 show a composition bias toward low complexity; it reads PYASLSAPGASSG. Pro residues predominate over residues 743–763; that stretch reads KPPPSPRYSPAPPPATAPPPR. Composition is skewed to polar residues over residues 849 to 860 and 1506 to 1528; these read MGSSVHQMSQQP and PSYSSGPSRYQPNNQYAPTSSPE. The span at 1532–1543 shows a compositional bias: low complexity; it reads GRSSLDSQRSSS. Residues 1555–1566 are compositionally biased toward polar residues; the sequence is QEPSTPVESNMY. Residues 1702-1724 show a composition bias toward basic and acidic residues; the sequence is KAERARKDREADEAFRKAAEADA. Composition is skewed to low complexity over residues 1725 to 1736 and 1798 to 1809; these read QKPAPAKKSWFG and GPPSRTASGSSA. A compositionally biased stretch (pro residues) spans 1810–1827; that stretch reads APPPPASASPMMPPPSSR. A compositionally biased stretch (polar residues) spans 1852–1866; the sequence is IQRSVSTGAAVSTPP.

Belongs to the SEC16 family.

The protein resides in the endoplasmic reticulum membrane. In terms of biological role, involved in the initiation of assembly of the COPII coat required for the formation of transport vesicles from the endoplasmic reticulum (ER) and the selection of cargo molecules. Also involved in autophagy. This is COPII coat assembly protein sec16 (sec16) from Aspergillus niger (strain ATCC MYA-4892 / CBS 513.88 / FGSC A1513).